We begin with the raw amino-acid sequence, 700 residues long: MNKGWLELESDPGLFTLLVEDFGVKGVQVEEIYDLQSKCQGPVYGFIFLFKWIEESRSRRKVSTLVDETSVIDDDIVNNMFFAHQLIPNSCATHALLSVLLNCNNVDLGPTLSRMKDFTKGFSPESKGYAIGNAPELAKARNSHARPEPRHLPEKQNGISAVRTMEAFHFVSYVPIKGRLFELDGLKVYPIDHGPWADDEEWTDKARRVIMERIGLATAGEPYHDIRFNLMAVVPDRRMKYESKLHILKMNRQTVLEALQQLIRVTQPELIQSQKSQESQSPEEAKPANSKTVAPESTHPDGADEPASQGHTTATQSPPTKSKPVAKASASSINGVPPANPNPIVQRLPAFLDNHNYAKSPMQEEEDLAAGVGRSRVPVRQHQQYSDDEDDYDDDEEEEVRNTNSAIRYKRKGQVKQEHAAGAADGQLSVLQPNTINVLAEKLKESQKDLSIPLSIKTTGGGAAVAIVTHSQPSPTPSNESTDTASEIGSAFNSPLRSPIRSANPTRPSSPVTSHISKVLFGEEDGLLRIDCLRYNRAVRDLGPIISSGLLHLTEDGVFCPLAAADGGKSSPPSIKPGEEAQVTIKLDEKEGSEASGSKEKELLALLKCVEAEIANYEACLKEEVEKRKKFKIDDQRRTHNYDEFICTFISMLAQEGMLASLVEQNISVRRRQGVSIGRLHKQRKPDRRKRSRPYKAKRQ.

Residues 4-235 (GWLELESDPG…IRFNLMAVVP (232 aa)) form the UCH catalytic domain. The active-site Nucleophile is cysteine 91. Histidine 169 serves as the catalytic Proton donor. Composition is skewed to low complexity over residues 273–282 (SQKSQESQSP) and 317–332 (SPPTKSKPVAKASASS). 3 disordered regions span residues 273–346 (SQKS…PIVQ), 363–405 (QEEE…NTNS), and 469–513 (THSQ…SPVT). Acidic residues predominate over residues 386-399 (SDDEDDYDDDEEEE). The stretch at 598 to 632 (SKEKELLALLKCVEAEIANYEACLKEEVEKRKKFK) forms a coiled coil. The ULD domain maps to 641–669 (NYDEFICTFISMLAQEGMLASLVEQNISV). The segment at 674 to 700 (GVSIGRLHKQRKPDRRKRSRPYKAKRQ) is disordered. A Nuclear localization signal motif is present at residues 688–693 (RRKRSR).

The protein belongs to the peptidase C12 family. BAP1 subfamily. Component of the PR-DUB complex.

It is found in the cytoplasm. The protein resides in the nucleus. It carries out the reaction Thiol-dependent hydrolysis of ester, thioester, amide, peptide and isopeptide bonds formed by the C-terminal Gly of ubiquitin (a 76-residue protein attached to proteins as an intracellular targeting signal).. Functionally, deubiquitinating enzyme that plays a key role in chromatin by mediating deubiquitination of histone H2A. Catalytic component of the PR-DUB complex, a complex that specifically mediates deubiquitination of histone H2A monoubiquitinated at 'Lys-119' (H2AK119ub1). This Gallus gallus (Chicken) protein is Ubiquitin carboxyl-terminal hydrolase BAP1 (BAP1).